A 116-amino-acid chain; its full sequence is U16-barytoxin-Tl1b (116 aa).

A signal peptide spans 1–20 (MKTIIVFLSLLVLATKFGDA). Positions 21–74 (KEGVNQKQKKEVTQNEFREEYLNEMAAMSLVQQLEAIERALFENEAGRNSRQKR) are excised as a propeptide. 3 disulfide bridges follow: Cys-75-Cys-90, Cys-82-Cys-95, and Cys-89-Cys-110.

It belongs to the neurotoxin 14 (magi-1) family. 06 (ICK-Trit) subfamily. As to expression, expressed by the venom gland.

It localises to the secreted. Its function is as follows. Ion channel inhibitor. The protein is U16-barytoxin-Tl1b of Trittame loki (Brush-footed trapdoor spider).